Consider the following 660-residue polypeptide: Dual specificity mitogen-activated protein kinase kinase 1 (660 aa).

A compositionally biased stretch (low complexity) spans 1–57 (MNTNTNTNTNISSSGNNIINTPTTNNNNKNNNNNNNNNNNSNNSNNNSSNNNNNNNN). 3 disordered regions span residues 1 to 60 (MNTN…NAVG), 105 to 169 (KGES…FNNL), and 204 to 229 (NNNYNNYNNNNNSNNNNNNYNNSNNN). Lys105 participates in a covalent cross-link: Glycyl lysine isopeptide (Lys-Gly) (interchain with G-Cter in SUMO). Residues 123–148 (LHSNLNPQLLASPTSSESMDFNQGFY) show a composition bias toward polar residues. A compositionally biased stretch (low complexity) spans 149-169 (NNNNNNNNNNNNNNLNNFNNL). One can recognise a Protein kinase domain in the interval 292–641 (LKIIRVLGRG…ASNLLNHEFV (350 aa)). ATP-binding positions include 298–306 (LGRGAGGVV) and Lys321. Residue Asp414 is the Proton acceptor of the active site. Disordered regions lie at residues 491–510 (SNLPHQQQQPLQQQQQQQQQ) and 539–573 (NNSNNNIRNSNNNNNNNNNNNNNNNNNNNNNVLDI). 2 stretches are compositionally biased toward low complexity: residues 496–510 (QQQQPLQQQQQQQQQ) and 539–569 (NNSNNNIRNSNNNNNNNNNNNNNNNNNNNNN).

The protein belongs to the protein kinase superfamily. STE Ser/Thr protein kinase family. MAP kinase kinase subfamily. Interacts with mip1. Mg(2+) serves as cofactor. In terms of processing, sumoylated and ubiquitinated in response to chemoattractant stimulation. Sumoylation is linked to kinase activation and results in translocation.

The protein localises to the cytoplasm. It localises to the nucleus. It carries out the reaction L-seryl-[protein] + ATP = O-phospho-L-seryl-[protein] + ADP + H(+). It catalyses the reaction L-threonyl-[protein] + ATP = O-phospho-L-threonyl-[protein] + ADP + H(+). The catalysed reaction is L-tyrosyl-[protein] + ATP = O-phospho-L-tyrosyl-[protein] + ADP + H(+). Its function is as follows. Required for cAMP-mediated activation of guanylyl cyclase activity and plays an essential role in aggregation, morphogenesis, and chemotaxis. Appears to act upstream of erk1 but not erk2. The chain is Dual specificity mitogen-activated protein kinase kinase 1 from Dictyostelium discoideum (Social amoeba).